Consider the following 674-residue polypeptide: Linear primary-alkylsulfatase (674 aa).

Positions 1–41 (MKLNALSTATHGSRSSPVKLWKFSTSFLLAASIIVSGQSWA) are cleaved as a signal peptide. Positions 192, 194, 196, 197, 303, and 322 each coordinate Zn(2+). Sulfate is bound by residues 330–335 (NTYSLR) and Arg340. His367 provides a ligand contact to Zn(2+). Tyr428 is a binding site for sulfate.

The protein belongs to the metallo-beta-lactamase superfamily. Type III sulfatase family. In terms of assembly, homodimer. It depends on Zn(2+) as a cofactor.

The protein localises to the periplasm. It catalyses the reaction a primary linear alkyl sulfate ester + H2O = a primary alcohol + sulfate + H(+). Inhibited by EDTA. Slightly activated in the presence of Ca(2+). In terms of biological role, alkylsulfatase that cleaves primary alkyl sulfates such as sodium octyl sulfate and the widely used detergent sodium dodecyl sulfate (SDS). The polypeptide is Linear primary-alkylsulfatase (Pseudomonas sp).